Here is a 3068-residue protein sequence, read N- to C-terminus: Genome polyprotein (3068 aa).

The Peptidase S30 domain occupies 144–287; the sequence is TFRDGHMNKF…MATVTHMEQY (144 aa). Catalysis depends on for P1 proteinase activity residues H195, D204, and S238. An Involved in interaction with stylet and aphid transmission motif is present at residues 337-340; that stretch reads KLTC. Positions 595 to 597 match the Involved in virions binding and aphid transmission motif; the sequence is PTK. The 123-residue stretch at 621-743 folds into the Peptidase C6 domain; the sequence is LYIALDGYCY…ESEIKHYRVG (123 aa). Catalysis depends on for helper component proteinase activity residues C629 and H702. One can recognise a Helicase ATP-binding domain in the interval 1228–1380; it reads DISISSERDF…TQFPVKLVVE (153 aa). Position 1241-1248 (1241-1248) interacts with ATP; that stretch reads GAVGSGKS. The DECH box motif lies at 1330 to 1333; it reads DECH. The 160-residue stretch at 1399-1558 folds into the Helicase C-terminal domain; it reads DMIQYGNNLL…NLPVMSSGVS (160 aa). Positions 1884 to 1891 match the Nuclear localization signal motif; that stretch reads KKGKGKGT. An O-(5'-phospho-RNA)-tyrosine modification is found at Y1906. Residues 2031–2249 form the Peptidase C4 domain; it reads AKTLMRGLRD…VLWGPLQLTK (219 aa). Active-site for nuclear inclusion protein A activity residues include H2076, D2111, and C2181. The RdRp catalytic domain occupies 2518–2642; the sequence is WIYCDADGSQ…AVNPERESLL (125 aa). Positions 2796 to 2833 are disordered; sequence SSSRSDTLDAGEEKKKNKEVATVSDGMGKKEVESTRDS. Positions 2822–2833 are enriched in basic and acidic residues; that stretch reads MGKKEVESTRDS. At T3051 the chain carries Phosphothreonine.

It belongs to the potyviridae genome polyprotein family. As to quaternary structure, interacts with host eIF4E protein (via cap-binding region); this interaction mediates the translation of the VPg-viral RNA conjugates. Part of a complex that comprises VPg, RNA, host EIF4E and EIF4G; this interaction mediates the translation of the VPg-viral RNA conjugates. Post-translationally, VPg is uridylylated by the polymerase and is covalently attached to the 5'-end of the genomic RNA. This uridylylated form acts as a nucleotide-peptide primer for the polymerase. Potyviral RNA is expressed as two polyproteins which undergo post-translational proteolytic processing. Genome polyprotein is processed by NIa-pro, P1 and HC-pro proteinases resulting in the production of at least ten individual proteins. P3N-PIPO polyprotein is cleaved by P1 and HC-pro proteinases resulting in the production of three individual proteins. The P1 proteinase and the HC-pro cleave only their respective C-termini autocatalytically. 6K1 is essential for proper proteolytic separation of P3 from CI.

Its subcellular location is the host cytoplasmic vesicle. The protein localises to the host nucleus. The protein resides in the virion. The catalysed reaction is RNA(n) + a ribonucleoside 5'-triphosphate = RNA(n+1) + diphosphate. It carries out the reaction Hydrolyzes glutaminyl bonds, and activity is further restricted by preferences for the amino acids in P6 - P1' that vary with the species of potyvirus, e.g. Glu-Xaa-Xaa-Tyr-Xaa-Gln-|-(Ser or Gly) for the enzyme from tobacco etch virus. The natural substrate is the viral polyprotein, but other proteins and oligopeptides containing the appropriate consensus sequence are also cleaved.. It catalyses the reaction Hydrolyzes a Gly-|-Gly bond at its own C-terminus, commonly in the sequence -Tyr-Xaa-Val-Gly-|-Gly, in the processing of the potyviral polyprotein.. In terms of biological role, required for aphid transmission and also has proteolytic activity. Only cleaves a Gly-Gly dipeptide at its own C-terminus. Interacts with virions and aphid stylets. Acts as a suppressor of RNA-mediated gene silencing, also known as post-transcriptional gene silencing (PTGS), a mechanism of plant viral defense that limits the accumulation of viral RNAs. May have RNA-binding activity. Functionally, has helicase activity. It may be involved in replication. Its function is as follows. Indispensable for virus replication. Reduces the abundance of host transcripts related to jasmonic acid biosynthesis therefore altering the host defenses. In order to increase its own stability, decreases host protein degradation pathways. Indispensable for virus replication. In terms of biological role, mediates the cap-independent, EIF4E-dependent translation of viral genomic RNAs. Binds to the cap-binding site of host EIF4E and thus interferes with the host EIF4E-dependent mRNA export and translation. VPg-RNA directly binds EIF4E and is a template for transcription. Also forms trimeric complexes with EIF4E-EIF4G, which are templates for translation. Functionally, has RNA-binding and proteolytic activities. Its function is as follows. An RNA-dependent RNA polymerase that plays an essential role in the virus replication. Involved in aphid transmission, cell-to-cell and systemis movement, encapsidation of the viral RNA and in the regulation of viral RNA amplification. The protein is Genome polyprotein of Pepper mottle virus (isolate California) (PeMV).